The sequence spans 89 residues: Probable monothiol glutaredoxin GrlA (89 aa).

Positions 1–89 (MLYMKGTPKM…EPMLRDAVAA (89 aa)) constitute a Glutaredoxin domain. Lys-5 serves as a coordination point for glutathione. Cys-13 is a [2Fe-2S] cluster binding site. Glutathione is bound by residues Arg-42, Phe-54, and 67 to 68 (SD).

The protein belongs to the glutaredoxin family. Monothiol subfamily.

The sequence is that of Probable monothiol glutaredoxin GrlA (grlA) from Legionella pneumophila subsp. pneumophila (strain Philadelphia 1 / ATCC 33152 / DSM 7513).